The primary structure comprises 224 residues: UPF0758 protein CJA_3522 (224 aa).

The MPN domain occupies 102-224 (LLSSPHLVRD…LVSLAERGWL (123 aa)). Zn(2+) contacts are provided by His173, His175, and Asp186. The JAMM motif motif lies at 173-186 (HNHPSGLAEPSQAD).

It belongs to the UPF0758 family.

This is UPF0758 protein CJA_3522 from Cellvibrio japonicus (strain Ueda107) (Pseudomonas fluorescens subsp. cellulosa).